Consider the following 146-residue polypeptide: MATILVLHGPNLNLLGTREPEIYGATTLADINSTLTEMCIAKGHHLQALQSNAEYELINRIHDAKGEGINFIIINPAAFTHTSVALRDALAAVDIPFIECHLSNVHTREAFRHHSYFSDLAQGVICGFGAQSYELALQAAFAKLDS.

Tyr-23 acts as the Proton acceptor in catalysis. Substrate is bound by residues Asn-75, His-81, and Asp-88. Catalysis depends on His-101, which acts as the Proton donor. Substrate contacts are provided by residues 102–103 and Arg-112; that span reads LS.

It belongs to the type-II 3-dehydroquinase family. In terms of assembly, homododecamer.

It carries out the reaction 3-dehydroquinate = 3-dehydroshikimate + H2O. The protein operates within metabolic intermediate biosynthesis; chorismate biosynthesis; chorismate from D-erythrose 4-phosphate and phosphoenolpyruvate: step 3/7. Its function is as follows. Catalyzes a trans-dehydration via an enolate intermediate. The polypeptide is 3-dehydroquinate dehydratase (Saccharophagus degradans (strain 2-40 / ATCC 43961 / DSM 17024)).